The sequence spans 333 residues: Phenylalanine--tRNA ligase alpha subunit (333 aa).

Residue Glu-248 coordinates Mg(2+).

This sequence belongs to the class-II aminoacyl-tRNA synthetase family. Phe-tRNA synthetase alpha subunit type 1 subfamily. In terms of assembly, tetramer of two alpha and two beta subunits. Requires Mg(2+) as cofactor.

It is found in the cytoplasm. It carries out the reaction tRNA(Phe) + L-phenylalanine + ATP = L-phenylalanyl-tRNA(Phe) + AMP + diphosphate + H(+). This chain is Phenylalanine--tRNA ligase alpha subunit, found in Ureaplasma urealyticum serovar 10 (strain ATCC 33699 / Western).